Consider the following 93-residue polypeptide: Parbolysin P2 (93 aa).

Intrachain disulfides connect Cys16-Cys37 and Cys22-Cys33.

This sequence belongs to the worm cytolysin family. As to expression, localized within the skin and proboscis and are most readily isolated from body mucus secretions.

The protein resides in the secreted. Functionally, cytolysin that shows hemolytic activity (on bovine erythrocytes, HC(50)=5.75 mg/ml). This hemolytic activity is completely inhibited by small unilamelar vesicles composed of PC/PG, PC/PI and PC/PS in 1:1 molar ratios (with at least 100 mg/ml concentration). The chain is Parbolysin P2 from Parborlasia corrugatus (Antarctic nemertean worm).